We begin with the raw amino-acid sequence, 373 residues long: Nodulation protein NolL (373 aa).

Transmembrane regions (helical) follow at residues 27–47, 62–82, 98–118, 140–160, 164–184, 212–232, 253–273, 286–306, and 324–344; these read DFAK…QYLI, SIYM…SSGA, QLLL…SAVI, WFIW…TFNR, WIIS…SITP, RYKW…FLGW, QVFL…QSMF, RFVA…QGAV, and RITF…AIRS.

Belongs to the acyltransferase 3 family.

It localises to the cell membrane. Its function is as follows. Thought to be an acetyltransferase that modifies the fucose of the nod factor. This is Nodulation protein NolL (nolL) from Mesorhizobium japonicum (strain LMG 29417 / CECT 9101 / MAFF 303099) (Mesorhizobium loti (strain MAFF 303099)).